Reading from the N-terminus, the 419-residue chain is L-rhamnose isomerase (419 aa).

Residues H262, D294, and D296 each contribute to the Mn(2+) site.

It belongs to the rhamnose isomerase family. In terms of assembly, homotetramer. Mn(2+) serves as cofactor.

The protein resides in the cytoplasm. It carries out the reaction L-rhamnopyranose = L-rhamnulose. The protein operates within carbohydrate degradation; L-rhamnose degradation; glycerone phosphate from L-rhamnose: step 1/3. Functionally, catalyzes the interconversion of L-rhamnose and L-rhamnulose. The polypeptide is L-rhamnose isomerase (Escherichia coli (strain 55989 / EAEC)).